Consider the following 100-residue polypeptide: ATP-dependent Clp protease adapter protein ClpS (100 aa).

This sequence belongs to the ClpS family. As to quaternary structure, binds to the N-terminal domain of the chaperone ClpA.

Its function is as follows. Involved in the modulation of the specificity of the ClpAP-mediated ATP-dependent protein degradation. This chain is ATP-dependent Clp protease adapter protein ClpS, found in Nitratidesulfovibrio vulgaris (strain DSM 19637 / Miyazaki F) (Desulfovibrio vulgaris).